Reading from the N-terminus, the 268-residue chain is Tubulin-specific chaperone C (268 aa).

The region spanning P98–I255 is the C-CAP/cofactor C-like domain.

The protein resides in the cytoplasm. It localises to the cytoskeleton. Functionally, tubulin-folding protein; involved in the early step of the tubulin folding pathway. The polypeptide is Tubulin-specific chaperone C (CIN2) (Saccharomyces cerevisiae (strain ATCC 204508 / S288c) (Baker's yeast)).